Reading from the N-terminus, the 1393-residue chain is DNA-directed RNA polymerase subunit beta' (1393 aa).

Residues cysteine 72, cysteine 74, cysteine 87, and cysteine 90 each contribute to the Zn(2+) site. Aspartate 463, aspartate 465, and aspartate 467 together coordinate Mg(2+). Zn(2+)-binding residues include cysteine 812, cysteine 887, cysteine 894, and cysteine 897.

Belongs to the RNA polymerase beta' chain family. In terms of assembly, the RNAP catalytic core consists of 2 alpha, 1 beta, 1 beta' and 1 omega subunit. When a sigma factor is associated with the core the holoenzyme is formed, which can initiate transcription. Mg(2+) serves as cofactor. Requires Zn(2+) as cofactor.

It carries out the reaction RNA(n) + a ribonucleoside 5'-triphosphate = RNA(n+1) + diphosphate. DNA-dependent RNA polymerase catalyzes the transcription of DNA into RNA using the four ribonucleoside triphosphates as substrates. This is DNA-directed RNA polymerase subunit beta' from Chlamydia caviae (strain ATCC VR-813 / DSM 19441 / 03DC25 / GPIC) (Chlamydophila caviae).